Here is a 106-residue protein sequence, read N- to C-terminus: Phosphoribosyl-ATP pyrophosphatase (106 aa).

It belongs to the PRA-PH family.

Its subcellular location is the cytoplasm. The catalysed reaction is 1-(5-phospho-beta-D-ribosyl)-ATP + H2O = 1-(5-phospho-beta-D-ribosyl)-5'-AMP + diphosphate + H(+). Its pathway is amino-acid biosynthesis; L-histidine biosynthesis; L-histidine from 5-phospho-alpha-D-ribose 1-diphosphate: step 2/9. The chain is Phosphoribosyl-ATP pyrophosphatase from Rhizorhabdus wittichii (strain DSM 6014 / CCUG 31198 / JCM 15750 / NBRC 105917 / EY 4224 / RW1) (Sphingomonas wittichii).